The following is a 395-amino-acid chain: MLSEALLVSAPGKVILHGEHAVVHGKVALAAALNLRTFLLLRPQSNGKVSVNLPNIGIKQVWDVGMLQRLDTSFLEQGDVSVPTLEQLEKLKKMGDLPRDRAGNEGMALLAFLYLYLAICRKQRTLPSLDMVVWSELPPGAGLGSSAAYSVCLAAALLTACEEVSNPLKDGVSVSRWPEEDLKSINKWAFEGERVIHGNPSGVDNAVSTWGGALRFQQGTMSSLKSLPSLQILLTNTKVPRSTKALVAAVRSRLTKFPEIVAPLLTSIDAISLECERVLGEMVAAPVPEQYLVLEELIDMNQHHLNALGVGHNSLDQLCQVTAAHGLHSKLTGAGGGGCGITLLKPGLEQATVEAAKQALTSCGFDCWETSIGAPGVSTHSAAAVGDPVRQALGL.

ATP-binding positions include Lys13, Asn55, Asn104, Ser135, and 140–146; that span reads GAGLGSS. The active-site Proton donor is the Ser146. The Mg(2+) site is built by Ser146 and Glu193. Asp204 (proton acceptor) is an active-site residue.

The protein belongs to the GHMP kinase family. Mevalonate kinase subfamily. Homodimer. Mg(2+) is required as a cofactor.

Its subcellular location is the cytoplasm. The protein localises to the peroxisome. The catalysed reaction is (R)-mevalonate + ATP = (R)-5-phosphomevalonate + ADP + H(+). Its pathway is isoprenoid biosynthesis; isopentenyl diphosphate biosynthesis via mevalonate pathway; isopentenyl diphosphate from (R)-mevalonate: step 1/3. Farnesyl pyrophosphate and geranyl pyrophosphate inhibit mevalonate kinase activity by binding competitively at the ATP-binding sites. Functionally, catalyzes the phosphorylation of mevalonate to mevalonate 5-phosphate, a key step in isoprenoid and cholesterol biosynthesis. The protein is Mevalonate kinase of Mus musculus (Mouse).